The primary structure comprises 214 residues: Shikimate kinase (214 aa).

An ATP-binding site is contributed by 35-40 (GAGKST). Ser-39 is a Mg(2+) binding site. Substrate-binding residues include Asp-57, Arg-81, and Gly-103. Arg-141 is a binding site for ATP. Arg-160 contacts substrate.

The protein belongs to the shikimate kinase family. Monomer. Mg(2+) is required as a cofactor.

The protein localises to the cytoplasm. The catalysed reaction is shikimate + ATP = 3-phosphoshikimate + ADP + H(+). Its pathway is metabolic intermediate biosynthesis; chorismate biosynthesis; chorismate from D-erythrose 4-phosphate and phosphoenolpyruvate: step 5/7. In terms of biological role, catalyzes the specific phosphorylation of the 3-hydroxyl group of shikimic acid using ATP as a cosubstrate. This is Shikimate kinase from Nitrobacter winogradskyi (strain ATCC 25391 / DSM 10237 / CIP 104748 / NCIMB 11846 / Nb-255).